The sequence spans 352 residues: tRNA-specific 2-thiouridylase MnmA (352 aa).

ATP-binding positions include Ala11–Ser18 and Met37. The active-site Nucleophile is Cys101. A disulfide bridge links Cys101 with Cys197. ATP is bound at residue Gly125. Positions Lys147 to Gln149 are interaction with tRNA. The active-site Cysteine persulfide intermediate is the Cys197. Positions Arg302–Tyr303 are interaction with tRNA.

This sequence belongs to the MnmA/TRMU family.

The protein resides in the cytoplasm. The catalysed reaction is S-sulfanyl-L-cysteinyl-[protein] + uridine(34) in tRNA + AH2 + ATP = 2-thiouridine(34) in tRNA + L-cysteinyl-[protein] + A + AMP + diphosphate + H(+). Its function is as follows. Catalyzes the 2-thiolation of uridine at the wobble position (U34) of tRNA, leading to the formation of s(2)U34. The protein is tRNA-specific 2-thiouridylase MnmA of Syntrophotalea carbinolica (strain DSM 2380 / NBRC 103641 / GraBd1) (Pelobacter carbinolicus).